Consider the following 515-residue polypeptide: Fatty acyl-CoA reductase 1 (515 aa).

Topologically, residues 1–465 (MVSIPEYYEG…ARKHLNKLRN (465 aa)) are cytoplasmic. Residues 451–507 (SGLPAARKHLNKLRNIRYGFNTILVILIWRIFIARSQMARNIWYFVVSLCYKFLSYF) are necessary and sufficient for PEX19-mediated localization into peroxisome membrane. The chain crosses the membrane as a helical span at residues 466-483 (IRYGFNTILVILIWRIFI). At 484-515 (ARSQMARNIWYFVVSLCYKFLSYFRASSTMRY) the chain is on the peroxisomal side.

This sequence belongs to the fatty acyl-CoA reductase family. Interacts with PEX19; PEX19 mediates the targeting of FAR1 to peroxisomes.

It localises to the peroxisome membrane. The enzyme catalyses a long-chain fatty acyl-CoA + 2 NADPH + 2 H(+) = a long-chain primary fatty alcohol + 2 NADP(+) + CoA. The catalysed reaction is hexadecanoyl-CoA + 2 NADPH + 2 H(+) = hexadecan-1-ol + 2 NADP(+) + CoA. It catalyses the reaction octadecanoyl-CoA + 2 NADPH + 2 H(+) = octadecan-1-ol + 2 NADP(+) + CoA. It carries out the reaction (9Z)-octadecenoyl-CoA + 2 NADPH + 2 H(+) = (9Z)-octadecen-1-ol + 2 NADP(+) + CoA. The enzyme catalyses (9Z,12Z)-octadecadienoyl-CoA + 2 NADPH + 2 H(+) = (9Z,12Z)-octadecadien-1-ol + 2 NADP(+) + CoA. The catalysed reaction is eicosanoyl-CoA + 2 NADPH + 2 H(+) = eicosan-1-ol + 2 NADP(+) + CoA. It catalyses the reaction 16-methylheptadecanoyl-CoA + 2 NADPH + 2 H(+) = 16-methylheptadecan-1-ol + 2 NADP(+) + CoA. It carries out the reaction 18-methylnonadecanoyl-CoA + 2 NADPH + 2 H(+) = 18-methylnonadecan-1-ol + 2 NADP(+) + CoA. Functionally, catalyzes the reduction of saturated and unsaturated C16 or C18 fatty acyl-CoA to fatty alcohols. It plays an essential role in the production of ether lipids/plasmalogens which synthesis requires fatty alcohols. In parallel, it is also required for wax monoesters production since fatty alcohols also constitute a substrate for their synthesis. This Pongo abelii (Sumatran orangutan) protein is Fatty acyl-CoA reductase 1.